The following is a 110-amino-acid chain: Single-stranded DNA-binding protein 1 (110 aa).

The SSB domain occupies 1–104 (MNKILLIGRM…VVGEEVQFLE (104 aa)).

Homotetramer.

The protein is Single-stranded DNA-binding protein 1 (ssb1) of Clostridium acetobutylicum (strain ATCC 824 / DSM 792 / JCM 1419 / IAM 19013 / LMG 5710 / NBRC 13948 / NRRL B-527 / VKM B-1787 / 2291 / W).